The following is a 229-amino-acid chain: Echinolectin 1 (229 aa).

A glycan (N-linked (GlcNAc...) asparagine) is linked at N94.

It is found in the secreted. This is Echinolectin 1 from Echinometra lucunter (Rock-boring urchin).